A 225-amino-acid polypeptide reads, in one-letter code: Urease accessory protein UreF (225 aa).

Belongs to the UreF family. As to quaternary structure, ureD, UreF and UreG form a complex that acts as a GTP-hydrolysis-dependent molecular chaperone, activating the urease apoprotein by helping to assemble the nickel containing metallocenter of UreC. The UreE protein probably delivers the nickel.

It localises to the cytoplasm. Required for maturation of urease via the functional incorporation of the urease nickel metallocenter. This chain is Urease accessory protein UreF, found in Arthrobacter sp. (strain FB24).